Consider the following 250-residue polypeptide: PTB-containing, cubilin and LRP1-interacting protein (250 aa).

The 158-residue stretch at 93–250 folds into the PID domain; the sequence is VTYLGKVSTT…VSQELESDDG (158 aa). The interval 229–250 is disordered; the sequence is DGRIHSNSSSEEVSQELESDDG. A phosphoserine mark is found at serine 236 and serine 247. A compositionally biased stretch (acidic residues) spans 241–250; sequence VSQELESDDG.

Found in a complex with PID1/PCLI1, LRP1 and CUBNI. Interacts with LRP1 and CUBN. Expressed in subcutaneous fat, heart, skeletal muscle, brain, colon, thymus, spleen, kidney, liver, small intestine, placenta, lung and peripheral blood leukocyte.

The protein localises to the cytoplasm. In terms of biological role, increases proliferation of preadipocytes without affecting adipocytic differentiation. The protein is PTB-containing, cubilin and LRP1-interacting protein (PID1) of Homo sapiens (Human).